The chain runs to 358 residues: UDP-N-acetylglucosamine--N-acetylmuramyl-(pentapeptide) pyrophosphoryl-undecaprenol N-acetylglucosamine transferase (358 aa).

UDP-N-acetyl-alpha-D-glucosamine-binding positions include 11–13, N120, R161, S188, and Q282; that span reads TGG.

The protein belongs to the glycosyltransferase 28 family. MurG subfamily.

The protein localises to the cell inner membrane. The enzyme catalyses di-trans,octa-cis-undecaprenyl diphospho-N-acetyl-alpha-D-muramoyl-L-alanyl-D-glutamyl-meso-2,6-diaminopimeloyl-D-alanyl-D-alanine + UDP-N-acetyl-alpha-D-glucosamine = di-trans,octa-cis-undecaprenyl diphospho-[N-acetyl-alpha-D-glucosaminyl-(1-&gt;4)]-N-acetyl-alpha-D-muramoyl-L-alanyl-D-glutamyl-meso-2,6-diaminopimeloyl-D-alanyl-D-alanine + UDP + H(+). Its pathway is cell wall biogenesis; peptidoglycan biosynthesis. Functionally, cell wall formation. Catalyzes the transfer of a GlcNAc subunit on undecaprenyl-pyrophosphoryl-MurNAc-pentapeptide (lipid intermediate I) to form undecaprenyl-pyrophosphoryl-MurNAc-(pentapeptide)GlcNAc (lipid intermediate II). This Synechococcus sp. (strain CC9311) protein is UDP-N-acetylglucosamine--N-acetylmuramyl-(pentapeptide) pyrophosphoryl-undecaprenol N-acetylglucosamine transferase.